The primary structure comprises 226 residues: MENTASGFLGPLLVLQAGFFLLTRILTIPQSLDSWWTSLNFLGGAPTCPGQNSQSPTSNHSPTSCPPICPGYRWMCLRRFIIFLFILLLCLIFLLVLLDYHGMLPVCPLLPGTSTTSTGPCKTCTIPAQGTSMFPSCCCTKPSDGNCTCIPIPSSWAFARFLWEWASVRFSWLSLLVPFVQWFVGLSPTVWLSVIWMMWYWGPSLYNILSPFLPLLPIFFCLWVYI.

At 1-7 (MENTASG) the chain is on the virion surface side. The helical transmembrane segment at 8–28 (FLGPLLVLQAGFFLLTRILTI) threads the bilayer. At 29–79 (PQSLDSWWTSLNFLGGAPTCPGQNSQSPTSNHSPTSCPPICPGYRWMCLRR) the chain is on the intravirion side. A helical membrane pass occupies residues 80-100 (FIIFLFILLLCLIFLLVLLDY). Residues 101–174 (HGMLPVCPLL…WASVRFSWLS (74 aa)) are Virion surface-facing. An N-linked (GlcNAc...) asparagine; by host glycan is attached at Asn146. The chain crosses the membrane as a helical span at residues 175-195 (LLVPFVQWFVGLSPTVWLSVI). At 196 to 201 (WMMWYW) the chain is on the intravirion side. A helical membrane pass occupies residues 202-224 (GPSLYNILSPFLPLLPIFFCLWV). At 225-226 (YI) the chain is on the virion surface side.

Belongs to the orthohepadnavirus major surface antigen family.

Its subcellular location is the virion membrane. Its function is as follows. The large envelope protein exists in two topological conformations, one which is termed 'external' or Le-HBsAg and the other 'internal' or Li-HBsAg. In its external conformation the protein attaches the virus to cell receptors and thereby initiating infection. This interaction determines the species specificity and liver tropism. This attachment induces virion internalization predominantly through caveolin-mediated endocytosis. The large envelope protein also assumes fusion between virion membrane and endosomal membrane. In its internal conformation the protein plays a role in virion morphogenesis and mediates the contact with the nucleocapsid like a matrix protein. The middle envelope protein plays an important role in the budding of the virion. It is involved in the induction of budding in a nucleocapsid independent way. In this process the majority of envelope proteins bud to form subviral lipoprotein particles of 22 nm of diameter that do not contain a nucleocapsid. This Hepatitis B virus genotype C subtype adr (isolate China/NC-1/1988) (HBV-C) protein is Small envelope protein (S).